The primary structure comprises 533 residues: Calcium/calmodulin-dependent protein kinase type II (533 aa).

ATP-binding positions include 18 to 26 (LGKGAFSVV) and lysine 41. Catalysis depends on aspartate 134, which acts as the Proton acceptor. Threonine 284 carries the phosphothreonine; by autocatalysis modification. Polar residues-rich tracts occupy residues 316 to 345 (TSDSTGSVASNGSTTHDTSQIAGTSSQPTS) and 377 to 391 (PPSTIKESSESSQTI). Disordered regions lie at residues 316–347 (TSDSTGSVASNGSTTHDTSQIAGTSSQPTSPA) and 369–400 (LLNKKEQGPPSTIKESSESSQTIDDNDSEKAQ).

It belongs to the protein kinase superfamily. CAMK Ser/Thr protein kinase family. CaMK subfamily. In terms of assembly, dodecamer. Subunits are tightly packed around a central ring-shaped scaffold with extensive contacts between the regulatory segment of one kinase and the catalytic domain of another enabling cooperative activation of a subunit by the adjacent molecule. Interacts with and phosphorylates daf-16; the interaction promotes daf-16 nuclear localization. Interacts with egl-2 and tir-1. Interacts with nsy-1. It depends on Mg(2+) as a cofactor.

Its subcellular location is the cytoplasm. The protein resides in the cell projection. The protein localises to the axon. It is found in the perikaryon. It carries out the reaction L-seryl-[protein] + ATP = O-phospho-L-seryl-[protein] + ADP + H(+). The catalysed reaction is L-threonyl-[protein] + ATP = O-phospho-L-threonyl-[protein] + ADP + H(+). Ca(2+)/calmodulin binding removes an autoinhibitory regulatory segment located C-terminal to the kinase domain. This releases the catalytic activity of the enzyme and makes accessible a regulatory residue Thr-284. Phosphorylation of Thr-284 by another kinase domain within the oligomeric holoenzyme keeps CaMKII active in the absence of Ca(2+)/calmodulin by preventing the rebinding of the regulatory segment to the kinase domain and by increasing the affinity of calmodulin for the enzyme. Can respond to high-frequency Ca(2+) pulses to become Ca(2+) independent. Its function is as follows. Role in locomotion and neuronal cell fate specification. Required for the regulation of synaptic density, egg laying, defecation, and meiotic maturation. Required for viability under chronic osmotic stress in which it acts downstream of osr-1. Regulates the synaptic trafficking of glr-1. Bidirectional modulator of neurotransmitter release with negative modulatory effects mainly mediated via slo-1 activation. May suppress the functional response to an internal pacemaker, perhaps by modulating the activity of the IP3 receptor. In Caenorhabditis briggsae, this protein is Calcium/calmodulin-dependent protein kinase type II.